The chain runs to 1198 residues: DNA polymerase (1198 aa).

Disordered regions lie at residues 1-90, 179-198, and 906-931; these read MALV…TVVA, LEQPDGQGQAAEVEDHQPNP, and ALADSDAEESEDERAPTPFYSPPSGT. Residues 30–40 show a composition bias toward low complexity; the sequence is QQPPRAAPAPA.

Belongs to the DNA polymerase type-B family. Heterodimer with the terminal protein; this heterodimer binds to bp 9 to 18 of the genome. Forms a complex with viral pTP, DBP and hosts NFIA and POU2F1/OCT1 for initiation of replication.

It is found in the host nucleus. It catalyses the reaction DNA(n) + a 2'-deoxyribonucleoside 5'-triphosphate = DNA(n+1) + diphosphate. Eukaryotic-type DNA polymerase involved in viral genomic replication. DNA synthesis is protein primed, and acts in a strand displacement replication. Assembles in complex with viral pTP, DBP, host NFIA and host POU2F1/OCT1 on viral origin of replication. The polymerase covalently transfers dCMP onto pTP, thereby initiating complementary strand synthesis. The protein is DNA polymerase of Homo sapiens (Human).